Consider the following 487-residue polypeptide: L-tartrate/succinate antiporter (487 aa).

14 helical membrane passes run 10-30 (YLAP…AGLE), 33-53 (TWLY…EPVP), 54-74 (GAVV…WLLF), 93-113 (WAVS…FMFG), 137-157 (TLFL…VTPS), 189-209 (IGSY…AIFL), 236-256 (FLGM…LAYV), 292-312 (LMVG…AAMV), 313-333 (GYSV…DIVS), 340-360 (VFFW…TGFI), 370-390 (SLSG…FYLL), 393-413 (FFAS…AAAL), 418-438 (IPLP…SILT), and 462-482 (LGAI…LLWM).

Belongs to the SLC13A/DASS transporter (TC 2.A.47) family. DIT1 subfamily.

It is found in the cell inner membrane. The enzyme catalyses (2R,3R)-tartrate(out) + succinate(in) = (2R,3R)-tartrate(in) + succinate(out). Catalyzes the uptake of tartrate in exchange for intracellular succinate. Essential for anaerobic L-tartrate fermentation. The chain is L-tartrate/succinate antiporter (ttdT) from Escherichia coli O6:H1 (strain CFT073 / ATCC 700928 / UPEC).